The chain runs to 651 residues: MQTLPSSETVLLGSNSAPPVLRSPGGDDVDIDFGDVFGGPPKRRSKVTSNEVTRHSFSESALRRRDVIVDVGDLLPQDEKPVFGEDTSSVRRRFTTDDFFDDIFRVNESSSLPGSRILSPAHKPESSSGTSSPSQFSLPAKATEIPTFNLAATRSLNKNKETVSSSPLSRTSSKADVVSTAKSYSDDCDDPPQVFVTGKGRQFHFSIYKWPNKGVPVVIWGSSRLSSMSKAEETTPVPLSDYRKTSVVEKLGKNEEGDGKSGLSGLKDVKKTSLKRPGVQTKEEKTETDLKSEQAFFGVSKAREANVKPLDSVESEQAFSGVSKAHEATTVKPLHSIFHEEDERQDEKIVSEREVRKGKSKAKNTRSFTEDSRTKKKSQGTKSSLDSSPIPDKSSFASSSAAPEVGKDGVKGKVSDFVKIFSKGASVGAGGESLGQSSRWRAKETPKTDIIHDGSNAKETVNIPDQQKKSTPDIPAMNRDQKPSQSTQKKDSDRESMNYKAPGDTVQEERQEPSTTHTTSEDIDEPFHVNFDVEDITQDENKMEEANKDAEEIKNIDAKIRKWSSGKSGNIRSLLSTLQYILWSGSGWKPVPLMDMIEGNAVRKSYQRALLILHPDKLQQKGASANQKYMAEKVFELLQEAWDHFNTLGPV.

Polar residues predominate over residues 1–17 (MQTLPSSETVLLGSNSA). 5 disordered regions span residues 1 to 56 (MQTL…TRHS), 114 to 138 (GSRI…QFSL), 156 to 176 (LNKN…SKAD), 250 to 291 (KLGK…TDLK), and 308 to 526 (KPLD…IDEP). Phosphoserine is present on Ser56. Positions 126 to 137 (SSSGTSSPSQFS) are enriched in low complexity. Basic and acidic residues-rich tracts occupy residues 250 to 259 (KLGKNEEGDG), 281 to 291 (TKEEKTETDLK), 337 to 357 (IFHE…EVRK), 405 to 416 (VGKDGVKGKVSD), 441 to 456 (RAKE…DGSN), and 488 to 497 (QKKDSDRESM). The stretch at 532–562 (DVEDITQDENKMEEANKDAEEIKNIDAKIRK) forms a coiled coil. One can recognise a J domain in the interval 586–651 (SGWKPVPLMD…WDHFNTLGPV (66 aa)).

Expressed in leaves and stems, but not in roots.

The protein resides in the cytoplasm. Required for chloroplast photorelocation movement; chloroplast accumulation upon low blue light and for chloroplast movement to the bottom of cells in darkness, by modulating chloroplast actin (Cp-actin) filaments distribution, appearance and disappearance. May mediate a slight resistance to aluminum in root hair cells. The chain is J domain-containing protein required for chloroplast accumulation response 1 (JAC1) from Arabidopsis thaliana (Mouse-ear cress).